The sequence spans 143 residues: Ribonuclease P protein component 2 (143 aa).

Belongs to the eukaryotic/archaeal RNase P protein component 2 family. In terms of assembly, consists of a catalytic RNA component and at least 4-5 protein subunits.

It is found in the cytoplasm. The catalysed reaction is Endonucleolytic cleavage of RNA, removing 5'-extranucleotides from tRNA precursor.. Part of ribonuclease P, a protein complex that generates mature tRNA molecules by cleaving their 5'-ends. The chain is Ribonuclease P protein component 2 from Saccharolobus islandicus (strain Y.N.15.51 / Yellowstone #2) (Sulfolobus islandicus).